We begin with the raw amino-acid sequence, 284 residues long: MKLVIVSGRSGSGKSVALRVLEDLGYYCVDNLPLPLIGSLLEQLKGSNDLVAISVDVRNLPEQDKVLVKQLASLPEGTELTSFFLNSSDKVLLKRYSETRRLHPLSKSRVSLQEAIKLEGKLLEPLSQQMDHYIDTSNLNIYELSDQVRQILLGSVDKELVINFESFGFKHGMPTEADFMFDVRFLPNPHWEPELRPLTGLDEPVAEFLNRQPLVNKFIWQIENLLETWLPHLERNNRSYLTIAIGCTGGQHRSVYVAEQLAKRFSNGKHKVNARHRELSHAKA.

8–15 contributes to the ATP binding site; that stretch reads GRSGSGKS. Residue 56–59 participates in GTP binding; that stretch reads DVRN.

This sequence belongs to the RapZ-like family.

In terms of biological role, displays ATPase and GTPase activities. This is Nucleotide-binding protein SO_3964 from Shewanella oneidensis (strain ATCC 700550 / JCM 31522 / CIP 106686 / LMG 19005 / NCIMB 14063 / MR-1).